Here is a 308-residue protein sequence, read N- to C-terminus: MKPAFTAGELNTYTSPGDVTAVSRALRHTGRRVMLVPTMGALHDGHLALVRAAKRVPGSVVVVSIFVNPLQFGAGEDLDAYPRTLDDDLALLRSEGVEIAFTPTAAAMYPNGLRTTVQPGPLAAELEGGPRPTHFAGVLTVVCKLLQIVRPDRIFFGEKDYQQLVMIRQMVADLNIDVQVVGVPTVREADGLAMSSRNRYLDATQRELAVTLSAALTAGAHAAHLGGAAALRAARAVLDAVPELTVDYLELRDAGLGPAPAHGSARLLVAARLGNTRLLDNIEMQIETPAGTAGPDGDRQYAQSPWRN.

An ATP-binding site is contributed by 39-46 (MGALHDGH). His46 acts as the Proton donor in catalysis. Gln71 contacts (R)-pantoate. Beta-alanine is bound at residue Gln71. 157–160 (GEKD) provides a ligand contact to ATP. (R)-pantoate is bound at residue Gln163. ATP is bound by residues Val186 and 194-197 (MSSR). The tract at residues 286–308 (IETPAGTAGPDGDRQYAQSPWRN) is disordered.

This sequence belongs to the pantothenate synthetase family. Homodimer.

It is found in the cytoplasm. The catalysed reaction is (R)-pantoate + beta-alanine + ATP = (R)-pantothenate + AMP + diphosphate + H(+). It functions in the pathway cofactor biosynthesis; (R)-pantothenate biosynthesis; (R)-pantothenate from (R)-pantoate and beta-alanine: step 1/1. Its function is as follows. Catalyzes the condensation of pantoate with beta-alanine in an ATP-dependent reaction via a pantoyl-adenylate intermediate. The protein is Pantothenate synthetase of Mycolicibacterium paratuberculosis (strain ATCC BAA-968 / K-10) (Mycobacterium paratuberculosis).